The following is a 913-amino-acid chain: DNA polymerase I (913 aa).

The region spanning 1–305 (MSQAPLVLVD…AGENGEAETP (305 aa)) is the 5'-3' exonuclease domain. One can recognise a 3'-5' exonuclease domain in the interval 306 to 501 (IQAEVDYDVV…LHQALWQKLE (196 aa)). The polymerase stretch occupies residues 505 to 913 (SLARVLTDIE…GVGSNWDEAH (409 aa)).

Belongs to the DNA polymerase type-A family. Single-chain monomer with multiple functions.

The enzyme catalyses DNA(n) + a 2'-deoxyribonucleoside 5'-triphosphate = DNA(n+1) + diphosphate. Its function is as follows. In addition to polymerase activity, this DNA polymerase exhibits 3'-5' and 5'-3' exonuclease activity. The chain is DNA polymerase I (polA) from Pseudomonas aeruginosa (strain ATCC 15692 / DSM 22644 / CIP 104116 / JCM 14847 / LMG 12228 / 1C / PRS 101 / PAO1).